Consider the following 473-residue polypeptide: MSRLVVVSNRIAPPDNKGGAGGLAVGVLGALKAAGGLWFGWSGETGNEDEPLKKVTKGNITWASFNLSEQDYEDYYCQFSNAVLWPAFHYRLDLVQFQRPAWEGYMRVNALLADKLLPLIKENDIIWVHDYHLLPFASELRKRGVNNRIGFFLHIPFPTPEIFNALPPHDELLEQLCDFDLLGFQTENDRLAFLDSLLSQTRVTTRSGKQHIAWGKDFQTEVYPIGIEPDEIALQAAGPLPPKLAQLKAELKNVKNIFSVERLDYSKGLPERFLAYEALLENYPQHRGKIRYTQIAPTSRGEVQAYQDIRHQLETEAGRINGKYGQLGWTPLYYLNQHFDRKLLMKIFRYSDVGLVTPLRDGMNLVAKEFVAAQDPANPGVLVLSQFAGAANELTSALIVNPYDRDDVAAALNRALTMPLAERISRHAEMLDVIVKNDINRWQERFIHDLKEVTPRSPERQQQNNVATFPKLA.

Residue R10 coordinates D-glucose 6-phosphate. Residue 21 to 22 (GG) coordinates UDP-alpha-D-glucose. Residues Y76 and D130 each coordinate D-glucose 6-phosphate. UDP-alpha-D-glucose-binding residues include R262 and K267. R300 is a D-glucose 6-phosphate binding site. UDP-alpha-D-glucose contacts are provided by residues F339 and 365–369 (LVAKE). The segment at 454 to 473 (TPRSPERQQQNNVATFPKLA) is disordered.

This sequence belongs to the glycosyltransferase 20 family. As to quaternary structure, homotetramer.

It carries out the reaction D-glucose 6-phosphate + UDP-alpha-D-glucose = alpha,alpha-trehalose 6-phosphate + UDP + H(+). The protein operates within glycan biosynthesis; trehalose biosynthesis. Its function is as follows. Probably involved in the osmoprotection via the biosynthesis of trehalose. Catalyzes the transfer of glucose from UDP-alpha-D-glucose (UDP-Glc) to D-glucose 6-phosphate (Glc-6-P) to form trehalose-6-phosphate. Acts with retention of the anomeric configuration of the UDP-sugar donor. This Salmonella choleraesuis (strain SC-B67) protein is Trehalose-6-phosphate synthase.